The following is a 284-amino-acid chain: D-tagatose-1,6-bisphosphate aldolase subunit GatY (284 aa).

The Proton donor role is filled by Asp-82. Zn(2+)-binding residues include His-83 and His-180. Gly-181 lines the dihydroxyacetone phosphate pocket. His-208 contributes to the Zn(2+) binding site. Dihydroxyacetone phosphate contacts are provided by residues 209 to 211 (GAS) and 230 to 233 (NVAT).

It belongs to the class II fructose-bisphosphate aldolase family. TagBP aldolase GatY subfamily. As to quaternary structure, forms a complex with GatZ. The cofactor is Zn(2+).

The enzyme catalyses D-tagatofuranose 1,6-bisphosphate = D-glyceraldehyde 3-phosphate + dihydroxyacetone phosphate. The protein operates within carbohydrate metabolism; D-tagatose 6-phosphate degradation; D-glyceraldehyde 3-phosphate and glycerone phosphate from D-tagatose 6-phosphate: step 2/2. In terms of biological role, catalytic subunit of the tagatose-1,6-bisphosphate aldolase GatYZ, which catalyzes the reversible aldol condensation of dihydroxyacetone phosphate (DHAP or glycerone-phosphate) with glyceraldehyde 3-phosphate (G3P) to produce tagatose 1,6-bisphosphate (TBP). Requires GatZ subunit for full activity and stability. Is involved in the catabolism of galactitol. This Escherichia coli (strain SMS-3-5 / SECEC) protein is D-tagatose-1,6-bisphosphate aldolase subunit GatY.